The chain runs to 319 residues: Forkhead box protein E3 (319 aa).

The disordered stretch occupies residues 1–69 (MAGRSDMDPP…GRRRRRPLQR (69 aa)). A compositionally biased stretch (low complexity) spans 44–53 (AAAGRGEAAP). A DNA-binding region (fork-head) is located at residues 71–165 (KPPYSYIALI…DNGSFLRRRK (95 aa)).

Its subcellular location is the nucleus. Functionally, transcription factor that controls lens epithelial cell growth through regulation of proliferation, apoptosis and cell cycle. During lens development, controls the ratio of the lens fiber cells to the cells of the anterior lens epithelium by regulating the rate of proliferation and differentiation. Controls lens vesicle closure and subsequent separation of the lens vesicle from ectoderm. Controls the expression of DNAJB1 in a pathway that is crucial for the development of the anterior segment of the eye. The sequence is that of Forkhead box protein E3 (FOXE3) from Homo sapiens (Human).